Here is a 267-residue protein sequence, read N- to C-terminus: Cilia- and flagella-associated protein 300 (267 aa).

Belongs to the CFAP300 family.

Its subcellular location is the cytoplasm. The protein resides in the cytoskeleton. It localises to the cilium axoneme. Its function is as follows. Cilium- and flagellum-specific protein that plays a role in axonemal structure organization and motility. May play a role in outer and inner dynein arm assembly. This chain is Cilia- and flagella-associated protein 300, found in Xenopus tropicalis (Western clawed frog).